Here is a 259-residue protein sequence, read N- to C-terminus: Energy-coupling factor transporter ATP-binding protein EcfA1 (259 aa).

Residues 3 to 230 (ITLNSVSFRY…EFDDVEIPFK (228 aa)) form the ABC transporter domain. 38 to 43 (GSGKTT) is a binding site for ATP. The active-site Proton acceptor is E157.

Belongs to the ABC transporter superfamily. Energy-coupling factor EcfA family. Forms a heterodimer with EcfA2. Forms a stable energy-coupling factor (ECF) transporter complex composed of 2 membrane-embedded substrate-binding proteins (S component, RibU, BioY), 2 ATP-binding proteins (A component) and 2 transmembrane proteins (T component) upon coexpression in E.coli. Stable subcomplexes with both A plus T components can also be isolated. This complex interacts with at least 2 substrate-specific components, BioY and RibU.

Its subcellular location is the cell inner membrane. In terms of biological role, ATP-binding (A) component of a common energy-coupling factor (ECF) ABC-transporter complex. Unlike classic ABC transporters this ECF transporter provides the energy necessary to transport a number of different substrates. Expression of the complex plus RibU in E.coli allows riboflavin uptake; uptake does not occur in the absence of RibU or the EcfA1A2T complex. The sequence is that of Energy-coupling factor transporter ATP-binding protein EcfA1 from Thermotoga maritima (strain ATCC 43589 / DSM 3109 / JCM 10099 / NBRC 100826 / MSB8).